The sequence spans 423 residues: Sporulation-regulated protein 28 (423 aa).

The Septin-type G domain occupies 28–342 (KGLQLSILLL…ENYRAKVLTE (315 aa)). The tract at residues 38–45 (GEKGSGKS) is G1 motif. GTP-binding positions include 38–45 (GEKGSGKS), glycine 124, 204–212 (KADGLTETE), and arginine 291. Positions 121 to 124 (LFPG) are G3 motif. The segment at 203 to 206 (PKAD) is G4 motif. Over residues 360-381 (RGSVSNVSTRRNSASRTLGNPD) the composition is skewed to polar residues. Residues 360–385 (RGSVSNVSTRRNSASRTLGNPDTNDE) are disordered. Residues 384-417 (DENAYQIHKEIDEKNRIIEDYQRKIDLLEKMLAA) adopt a coiled-coil conformation.

This sequence belongs to the TRAFAC class TrmE-Era-EngA-EngB-Septin-like GTPase superfamily. Septin GTPase family. In terms of assembly, interacts with itself. Interacts with CDC11 and SPR3; probably to form a ring at the bud neck.

It localises to the membrane. Its subcellular location is the bud neck. Its function is as follows. Septins are GTPases involved in cytokinesis that assemble into filaments and form a ring at the cleavage site. May act by recruiting MYO1 and HOF1, a protein involved in septation, to the site of cleavage. Septins are also involved in cell morphogenesis, bud site selection, chitin deposition, cell cycle regulation, cell compartmentalization and spore wall formation. The chain is Sporulation-regulated protein 28 (SPR28) from Saccharomyces cerevisiae (strain ATCC 204508 / S288c) (Baker's yeast).